Consider the following 680-residue polypeptide: Fermitin family homolog 2 (680 aa).

An interaction with membranes containing phosphatidylinositol phosphate region spans residues 40 to 81 (HIGGVMLKLVEKLDVKKDWSDHALWWEKKRTWLLKTHWTLDK). The disordered stretch occupies residues 141-162 (LKKPRDPTKKKKKKLDDQSEDE). Residues Ser-159, Ser-181, Ser-339, and Ser-351 each carry the phosphoserine modification. The FERM domain maps to 189 to 661 (MTPTYDAHDG…GYIFLSTRAK (473 aa)). Positions 380–476 (KVFKPKKLTL…WMAACRLASK (97 aa)) constitute a PH domain. Residue Lys-383 participates in a 1,2-diacyl-sn-glycero-3-phospho-(1D-myo-inositol-3,4,5-trisphosphate) binding. Ser-666 carries the post-translational modification Phosphoserine.

It belongs to the kindlin family. As to quaternary structure, interacts with ITGB1; the interaction is inhibited in presence of ITGB1BP1. Interacts with FBLIM1. Interacts with active, unphosphorylated CTNNB1. Identified in a complex with CTNNB1 and TCF7L2/TCF4. Interacts with ILK, ITGB1 and ITGB3. In terms of tissue distribution, detected in adult heart muscle (at protein level). Detected in heart, skeletal muscle and testis.

It localises to the cytoplasm. The protein localises to the cell cortex. The protein resides in the cytoskeleton. It is found in the stress fiber. Its subcellular location is the cell junction. It localises to the focal adhesion. The protein localises to the membrane. The protein resides in the cell projection. It is found in the lamellipodium membrane. Its subcellular location is the nucleus. It localises to the myofibril. The protein localises to the sarcomere. The protein resides in the i band. It is found in the cell surface. Functionally, scaffolding protein that enhances integrin activation mediated by TLN1 and/or TLN2, but activates integrins only weakly by itself. Binds to membranes enriched in phosphoinositides. Enhances integrin-mediated cell adhesion onto the extracellular matrix and cell spreading; this requires both its ability to interact with integrins and with phospholipid membranes. Required for the assembly of focal adhesions. Participates in the connection between extracellular matrix adhesion sites and the actin cytoskeleton and also in the orchestration of actin assembly and cell shape modulation. Recruits FBLIM1 to focal adhesions. Plays a role in the TGFB1 and integrin signaling pathways. Stabilizes active CTNNB1 and plays a role in the regulation of transcription mediated by CTNNB1 and TCF7L2/TCF4 and in Wnt signaling. The chain is Fermitin family homolog 2 (Fermt2) from Mus musculus (Mouse).